Here is a 156-residue protein sequence, read N- to C-terminus: Arginine repressor (156 aa).

Belongs to the ArgR family.

The protein localises to the cytoplasm. Its pathway is amino-acid biosynthesis; L-arginine biosynthesis [regulation]. In terms of biological role, regulates arginine biosynthesis genes. The protein is Arginine repressor of Yersinia pseudotuberculosis serotype I (strain IP32953).